Reading from the N-terminus, the 25-residue chain is Caerin-1.3 (25 aa).

Leucine amide is present on Leu25.

In terms of tissue distribution, expressed by the skin parotoid and/or rostral glands.

The protein localises to the secreted. Antibacterial peptide, that adopts an alpha helical conformation which can disrupt bacterial membranes. Each caerin displays a different antimicrobial specificity. This Ranoidea caerulea (Green tree frog) protein is Caerin-1.3.